The sequence spans 462 residues: 23S rRNA (uracil(1939)-C(5))-methyltransferase RlmD (462 aa).

The TRAM domain maps to 6 to 76 (KSRKPQQPEY…KRLEEAEMVE (71 aa)). [4Fe-4S] cluster-binding residues include Cys90, Cys96, Cys99, and Cys178. Positions 287, 316, 321, 340, 367, and 388 each coordinate S-adenosyl-L-methionine. Cys414 functions as the Nucleophile in the catalytic mechanism.

This sequence belongs to the class I-like SAM-binding methyltransferase superfamily. RNA M5U methyltransferase family. RlmD subfamily.

The catalysed reaction is uridine(1939) in 23S rRNA + S-adenosyl-L-methionine = 5-methyluridine(1939) in 23S rRNA + S-adenosyl-L-homocysteine + H(+). Its function is as follows. Catalyzes the formation of 5-methyl-uridine at position 1939 (m5U1939) in 23S rRNA. In Acinetobacter baumannii (strain AB0057), this protein is 23S rRNA (uracil(1939)-C(5))-methyltransferase RlmD.